A 76-amino-acid chain; its full sequence is Sec-independent protein translocase protein TatA (76 aa).

Residues Met-1–Gly-21 traverse the membrane as a helical segment. The disordered stretch occupies residues Arg-44–Ser-76. Positions Gln-55–Ala-65 are enriched in polar residues.

The protein belongs to the TatA/E family. The Tat system comprises two distinct complexes: a TatABC complex, containing multiple copies of TatA, TatB and TatC subunits, and a separate TatA complex, containing only TatA subunits. Substrates initially bind to the TatABC complex, which probably triggers association of the separate TatA complex to form the active translocon.

The protein localises to the cell inner membrane. Part of the twin-arginine translocation (Tat) system that transports large folded proteins containing a characteristic twin-arginine motif in their signal peptide across membranes. TatA could form the protein-conducting channel of the Tat system. The chain is Sec-independent protein translocase protein TatA from Methylibium petroleiphilum (strain ATCC BAA-1232 / LMG 22953 / PM1).